The primary structure comprises 177 residues: uncharacterized protein (177 aa).

This is an uncharacterized protein from Acanthamoeba polyphaga mimivirus (APMV).